We begin with the raw amino-acid sequence, 76 residues long: Secreted RxLR effector protein 31 (76 aa).

Residues 1 to 24 (MRHCACLFHLFLIGFLCNVYFSAC) form the signal peptide. A RxLR-dEER motif is present at residues 49–64 (RILRANDSEFLLTEER). Residue Asn-54 is glycosylated (N-linked (GlcNAc...) asparagine).

The protein belongs to the RxLR effector family.

It localises to the secreted. It is found in the host nucleus. The protein localises to the host cytoplasm. Functionally, secreted effector that dos not suppress the host cell death induced by cell death-inducing proteins. In Plasmopara viticola (Downy mildew of grapevine), this protein is Secreted RxLR effector protein 31.